Reading from the N-terminus, the 371-residue chain is 4-hydroxy-3-methylbut-2-en-1-yl diphosphate synthase (flavodoxin) (371 aa).

Positions 268, 271, 303, and 310 each coordinate [4Fe-4S] cluster.

Belongs to the IspG family. The cofactor is [4Fe-4S] cluster.

It catalyses the reaction (2E)-4-hydroxy-3-methylbut-2-enyl diphosphate + oxidized [flavodoxin] + H2O + 2 H(+) = 2-C-methyl-D-erythritol 2,4-cyclic diphosphate + reduced [flavodoxin]. It functions in the pathway isoprenoid biosynthesis; isopentenyl diphosphate biosynthesis via DXP pathway; isopentenyl diphosphate from 1-deoxy-D-xylulose 5-phosphate: step 5/6. In terms of biological role, converts 2C-methyl-D-erythritol 2,4-cyclodiphosphate (ME-2,4cPP) into 1-hydroxy-2-methyl-2-(E)-butenyl 4-diphosphate. The protein is 4-hydroxy-3-methylbut-2-en-1-yl diphosphate synthase (flavodoxin) of Macrococcus caseolyticus (strain JCSC5402) (Macrococcoides caseolyticum).